The following is a 209-amino-acid chain: LexA repressor (209 aa).

Residues 30–50 (RVEIAREIGFKSPNAAEEHLK) constitute a DNA-binding region (H-T-H motif). Active-site for autocatalytic cleavage activity residues include Ser-126 and Lys-163.

This sequence belongs to the peptidase S24 family. Homodimer.

It carries out the reaction Hydrolysis of Ala-|-Gly bond in repressor LexA.. Its function is as follows. Represses a number of genes involved in the response to DNA damage (SOS response), including recA and lexA. In the presence of single-stranded DNA, RecA interacts with LexA causing an autocatalytic cleavage which disrupts the DNA-binding part of LexA, leading to derepression of the SOS regulon and eventually DNA repair. This Glaesserella parasuis serovar 5 (strain SH0165) (Haemophilus parasuis) protein is LexA repressor.